Consider the following 455-residue polypeptide: Guanine/hypoxanthine permease GhxQ (455 aa).

Over 1–31 (MSGDILQTPDAPKPQGALDNYFKITARGSTV) the chain is Cytoplasmic. The chain crosses the membrane as a helical span at residues 32-55 (RQEVLAGLTTFLAMVYSVIVVPGM). Residues 56 to 65 (LGKAGFPPAA) are Periplasmic-facing. A helical membrane pass occupies residues 66 to 84 (VFVATCLVAGFGSLLMGLW). The Cytoplasmic segment spans residues 85–86 (AN). A discontinuously helical membrane pass occupies residues 87–103 (LPMAIGCAISLTAFTAF). The Periplasmic segment spans residues 104–115 (SLVLGQQISVPV). The helical transmembrane segment at 116–135 (ALGAVFLMGVIFTAISVTGV) threads the bilayer. Residues 136–147 (RTWILRNLPMGI) lie on the Cytoplasmic side of the membrane. A helical transmembrane segment spans residues 148–168 (AHGTGIGIGLFLLLIAANGVG). Topologically, residues 169–186 (MVIKNPIEGLPVALGAFT) are periplasmic. The helical transmembrane segment at 187 to 204 (SFPVMMSLLGLAVIFGLE) threads the bilayer. Topologically, residues 205-208 (KCRV) are cytoplasmic. Residues 209 to 228 (PGGILLVIIAISIIGLIFDP) form a helical membrane-spanning segment. Residues 229-260 (AVKYHGLVAMPSLTGEDGKSLIFSLDIMGALQ) are Periplasmic-facing. Residues 261–289 (PTVLPSVLALVMTAVFDATGTIRAVAGQA) traverse the membrane as a helical segment. The Cytoplasmic portion of the chain corresponds to 290–302 (NLLDKDNQIINGG). The helical transmembrane segment at 303-318 (KALTSDSVSSIFSGLV) threads the bilayer. Topologically, residues 319 to 320 (GA) are periplasmic. A discontinuously helical transmembrane segment spans residues 321 to 336 (APAAVYIESAAGTAAG). Topologically, residues 337–340 (GKTG) are cytoplasmic. A helical transmembrane segment spans residues 341–355 (LTATVVGALFLLILF). Topologically, residues 356–366 (LSPLSFLIPGY) are periplasmic. The chain crosses the membrane as a helical span at residues 367-386 (ATAPALMYVGLLMLSNVSKL). Topologically, residues 387–391 (DFNDF) are cytoplasmic. The segment at residues 392–427 (IDAMAGLVCAVFIVLTCNIVTGIMLGFVTLVVGRVF) is an intramembrane region (discontinuously helical). At 428–455 (AREWQKLNIGTVIITAALVAFYAGGWAI) the chain is on the cytoplasmic side.

The protein belongs to the nucleobase:cation symporter-2 (NCS2) (TC 2.A.40) family. Azg-like subfamily.

The protein localises to the cell membrane. Its function is as follows. High-affinity transporter for guanine and hypoxanthine. The chain is Guanine/hypoxanthine permease GhxQ (ghxQ) from Escherichia coli (strain K12).